The chain runs to 268 residues: Ribosomal RNA large subunit methyltransferase E (268 aa).

S-adenosyl-L-methionine contacts are provided by glycine 50, tryptophan 52, aspartate 68, aspartate 84, and aspartate 109. Lysine 149 acts as the Proton acceptor in catalysis. Positions 196–254 constitute a TRAM domain; that stretch reads PLRKGDKFVVDIEKLGSSGDGAVLIEGFVVFVKEVEVGEKVRIKISDVKPNFAFADVEE.

This sequence belongs to the class I-like SAM-binding methyltransferase superfamily. RNA methyltransferase RlmE family.

It is found in the cytoplasm. The enzyme catalyses uridine(2552) in 23S rRNA + S-adenosyl-L-methionine = 2'-O-methyluridine(2552) in 23S rRNA + S-adenosyl-L-homocysteine + H(+). Its function is as follows. Specifically methylates the uridine in position 2552 of 23S rRNA at the 2'-O position of the ribose in the fully assembled 50S ribosomal subunit. The chain is Ribosomal RNA large subunit methyltransferase E from Methanosarcina mazei (strain ATCC BAA-159 / DSM 3647 / Goe1 / Go1 / JCM 11833 / OCM 88) (Methanosarcina frisia).